Here is a 103-residue protein sequence, read N- to C-terminus: ATP synthase subunit H, mitochondrial (103 aa).

The N-terminal 26 residues, 1–26 (MSRILKSLSRSYSTTSPRLYVDVVQG), are a transit peptide targeting the mitochondrion.

It belongs to the ATPase h subunit family. F-type ATPases have 2 components, CF(1) - the catalytic core - and CF(0) - the membrane proton channel.

It localises to the mitochondrion. The protein localises to the mitochondrion inner membrane. Functionally, mitochondrial membrane ATP synthase (F(1)F(0) ATP synthase or Complex V) produces ATP from ADP in the presence of a proton gradient across the membrane which is generated by electron transport complexes of the respiratory chain. F-type ATPases consist of two structural domains, F(1) - containing the extramembraneous catalytic core and F(0) - containing the membrane proton channel, linked together by a central stalk and a peripheral stalk. During catalysis, ATP synthesis in the catalytic domain of F(1) is coupled via a rotary mechanism of the central stalk subunits to proton translocation. Part of the complex F(0) domain. Minor subunit located with subunit a in the membrane. The protein is ATP synthase subunit H, mitochondrial (atp14) of Schizosaccharomyces pombe (strain 972 / ATCC 24843) (Fission yeast).